We begin with the raw amino-acid sequence, 531 residues long: Pyruvate kinase (531 aa).

Arg-86 lines the substrate pocket. 4 residues coordinate K(+): Asn-88, Ser-90, Asp-121, and Thr-122. 88–91 (NFSH) provides a ligand contact to ATP. Arg-128 and Lys-211 together coordinate ATP. Position 277 (Glu-277) interacts with Mg(2+). The substrate site is built by Gly-300, Asp-301, and Thr-333. Asp-301 serves as a coordination point for Mg(2+).

It belongs to the pyruvate kinase family. In terms of assembly, homotetramer. The cofactor is Mg(2+). Requires K(+) as cofactor.

The catalysed reaction is pyruvate + ATP = phosphoenolpyruvate + ADP + H(+). It participates in carbohydrate degradation; glycolysis; pyruvate from D-glyceraldehyde 3-phosphate: step 5/5. This Eimeria tenella (Coccidian parasite) protein is Pyruvate kinase (PYK).